The primary structure comprises 590 residues: J protein JJJ1 (590 aa).

A J domain is found at 3 to 72; it reads TCYYELLGVE…RAWYDSHKEQ (70 aa). Positions 269 to 284 are enriched in basic and acidic residues; sequence EQRKLKEQQRKNELNN. Positions 269–293 are disordered; sequence EQRKLKEQQRKNELNNRRKFGNDNN. The C2H2-type 1 zinc-finger motif lies at 338–362; it reads YECFICNKTFKSEKQLKNHINTKLH. Position 393 is a phosphoserine (S393). The segment at 441–546 is disordered; that stretch reads EVEDVSSDEN…TLPSSMSPTS (106 aa). Over residues 455 to 467 the composition is skewed to basic residues; that stretch reads TKNKKKRKKKKKA. The segment covering 480–489 has biased composition (basic and acidic residues); it reads DDTKDKRSNE. T504 carries the phosphothreonine modification. Residues 513 to 527 show a composition bias toward basic residues; that stretch reads KAKKKKGKQPKKNSK. The span at 528–546 shows a compositional bias: low complexity; sequence STKSTPSLSTLPSSMSPTS. Residues 549–573 form a C2H2-type 2 zinc finger; sequence EVCTTCGESFDSRNKLFNHVKIAGH.

Its subcellular location is the nucleus. The sequence is that of J protein JJJ1 (JJJ1) from Saccharomyces cerevisiae (strain ATCC 204508 / S288c) (Baker's yeast).